The primary structure comprises 504 residues: ATP synthase subunit alpha, chloroplastic (504 aa).

170–177 (GDRQTGKT) serves as a coordination point for ATP.

Belongs to the ATPase alpha/beta chains family. In terms of assembly, F-type ATPases have 2 components, CF(1) - the catalytic core - and CF(0) - the membrane proton channel. CF(1) has five subunits: alpha(3), beta(3), gamma(1), delta(1), epsilon(1). CF(0) has four main subunits: a, b, b' and c.

It localises to the plastid. The protein localises to the chloroplast thylakoid membrane. The catalysed reaction is ATP + H2O + 4 H(+)(in) = ADP + phosphate + 5 H(+)(out). Functionally, produces ATP from ADP in the presence of a proton gradient across the membrane. The alpha chain is a regulatory subunit. This chain is ATP synthase subunit alpha, chloroplastic, found in Pyropia yezoensis (Susabi-nori).